Consider the following 82-residue polypeptide: Small ribosomal subunit protein bS18 (82 aa).

Residues 1-20 are disordered; the sequence is MVDINQIPTRRPFHRRRKTC.

It belongs to the bacterial ribosomal protein bS18 family. Part of the 30S ribosomal subunit. Forms a tight heterodimer with protein bS6.

Its function is as follows. Binds as a heterodimer with protein bS6 to the central domain of the 16S rRNA, where it helps stabilize the platform of the 30S subunit. This Mesorhizobium japonicum (strain LMG 29417 / CECT 9101 / MAFF 303099) (Mesorhizobium loti (strain MAFF 303099)) protein is Small ribosomal subunit protein bS18.